We begin with the raw amino-acid sequence, 370 residues long: ADP-ribosylation factor-like protein 13B (370 aa).

S-palmitoyl cysteine attachment occurs at residues C12, C13, C14, and C15. Residues 31–38 (GIGSAGKT), 75–79 (DVGGD), and 134–137 (NNQN) each bind GTP. K239 is covalently cross-linked (Glycyl lysine isopeptide (Lys-Gly) (interchain with G-Cter in SUMO)). Residues 255–331 (RNQPPVQPPI…PVSPESNSVK (77 aa)) are disordered. A compositionally biased stretch (pro residues) spans 259 to 271 (PVQPPIPPDPPSD). Polar residues-rich tracts occupy residues 287 to 303 (LASS…TPET) and 314 to 328 (RISQ…PESN). Residue K331 forms a Glycyl lysine isopeptide (Lys-Gly) (interchain with G-Cter in SUMO) linkage. The RVVP region stretch occupies residues 366–369 (RVVP).

Belongs to the small GTPase superfamily. Arf family. In terms of assembly, monomer. Post-translationally, sumoylation regulates the targeting of membrane sensory receptors to the cilium. In terms of tissue distribution, specifically expressed in ciliated sensory neurons throughout development in both hermaphrodites.

The protein localises to the cell projection. Its subcellular location is the cilium membrane. Its function is as follows. Cilium-specific protein required to control the microtubule-based, ciliary axoneme structure. Required for normal sensory cilium function. May act by maintaining the association between IFT subcomplexes A and B. The polypeptide is ADP-ribosylation factor-like protein 13B (arl-13) (Caenorhabditis elegans).